Reading from the N-terminus, the 367-residue chain is Mating-type protein ALPHA2 (367 aa).

The homeobox; TALE-type DNA-binding region spans 273-338 (GADAIDSEKL…NKRRTGAKKR (66 aa)).

Belongs to the TALE/M-ATYP homeobox family. In terms of assembly, forms a heterodimer with A1.

Its subcellular location is the nucleus. In terms of biological role, mating type proteins are sequence specific DNA-binding proteins that act as master switches in yeast differentiation by controlling gene expression in a cell type-specific fashion. Transcriptional corepressor that acts in conjunction with A1 to repress transcription of haploid-specific genes. The sequence is that of Mating-type protein ALPHA2 (MATB2) from Yarrowia lipolytica (strain CLIB 122 / E 150) (Yeast).